Here is a 69-residue protein sequence, read N- to C-terminus: UPF0434 protein Rmet_0534 (69 aa).

It belongs to the UPF0434 family.

This Cupriavidus metallidurans (strain ATCC 43123 / DSM 2839 / NBRC 102507 / CH34) (Ralstonia metallidurans) protein is UPF0434 protein Rmet_0534.